The following is a 668-amino-acid chain: Neurexin-3-beta (668 aa).

An N-terminal signal peptide occupies residues 1–35 (MHLRTNPSICPGRRPAWTLWMCSLFWGCIVSSVWS). At 36-593 (SSNVASSASS…EVVRESSSTT (558 aa)) the chain is on the extracellular side. In terms of domain architecture, Laminin G-like spans 84-284 (ATYIFGKSGG…NPNIKINGSV (201 aa)). Positions 510–529 (TASSSTGMVPKLPAGKMNNR) are disordered. Residues 594 to 614 (GMVVGIVAAAALCILILLYAM) form a helical membrane-spanning segment. Residues 615–668 (YKYRNRDEGSYQVDETRNYISNSAQSNGTLMKEKQQSSKSGHKKQKNKDKEYYV) are Cytoplasmic-facing. The tract at residues 636–668 (NSAQSNGTLMKEKQQSSKSGHKKQKNKDKEYYV) is disordered.

The protein belongs to the neurexin family. Processed by alpha-secretase leading to the formation of an extracellular soluble protein as well as a C-terminal membrane-embedded fragment (CTF). Proteolysis of these CTFs by gamma-secretase releases intracellular domains (ICDs) and extracellular peptides. In terms of tissue distribution, brain and arteries (at protein level).

It is found in the membrane. Its function is as follows. Neuronal cell surface protein that may be involved in cell recognition and cell adhesion. Plays a role in angiogenesis. This Gallus gallus (Chicken) protein is Neurexin-3-beta (NRXN3).